We begin with the raw amino-acid sequence, 416 residues long: TNF receptor-associated factor 1 (416 aa).

The interval 1-24 (MASSSGSSPRPAPDENEFPFGCPP) is disordered. Ser146 carries the post-translational modification Phosphoserine. Positions 182-264 (MKEKLLAELE…QSLRLMEEAS (83 aa)) form a coiled coil. Glycyl lysine isopeptide (Lys-Gly) (interchain with G-Cter in ubiquitin) cross-links involve residues Lys185 and Lys193. The MATH domain maps to 266–412 (DGTFLWKITN…DDTMFLKCIV (147 aa)).

Homotrimer. Heterotrimer with TRAF2. Interacts with TNFRSF1A/TNFR1, TNFRSF1B/TNFR2, TNFRSF4, TNFRSF5/CD40, TNFRSF8/CD30, TNFRSF9/CD137, TNFRSF11A/RANK, TNFRSF13C, TNFRSF18/AITR, TNFRSF17/BCMA, TNFRSF19/TROY, TNFRSF19L/RELT, XEDAR, EDAR, Epstein-Barr virus BNFL1/LMP-1, TANK/ITRAF, TRAIP and RIPK2. Interacts with BIRC2 and BIRC3 N-terminus; a single BIRC2 or BIRC3 molecule interacts with a heterotrimer formed by TRAF1 and TRAF2. Interacts with NFATC2IP, TRAFD1 and with HIVEP3. Interacts with MAP3K14. Interacts with GPS2. Post-translationally, polyubiquitinated by BIRC2 and/or BIRC3, leading to its subsequent proteasomal degradation. Ubiquitinated by the SCF(FBXL2) complex, leading to its degradation by the proteasome.

In terms of biological role, adapter molecule that regulates the activation of NF-kappa-B and JNK. Plays a role in the regulation of cell survival and apoptosis. The heterotrimer formed by TRAF1 and TRAF2 is part of a E3 ubiquitin-protein ligase complex that promotes ubiquitination of target proteins, such as MAP3K14. The TRAF1/TRAF2 complex recruits the antiapoptotic E3 protein-ubiquitin ligases BIRC2 and BIRC3 to TNFRSF1B/TNFR2. The sequence is that of TNF receptor-associated factor 1 (TRAF1) from Homo sapiens (Human).